The sequence spans 83 residues: UPF0297 protein LCK_00468 (83 aa).

This sequence belongs to the UPF0297 family.

In Leuconostoc citreum (strain KM20), this protein is UPF0297 protein LCK_00468.